A 361-amino-acid polypeptide reads, in one-letter code: MLYNLLLPHIHNSHIANLFHYITFRSGLAIIITLSISFVTGPILIKFLRSLQKYGQPIRSDGPESHKTKAGTPTMGGIMIILSSCLSTLLLADLTNKYIWITLFGFISFGIIGFMDDYAKVKRNNHYGVRGKSKFLLQGIISLIIYVLLEYLDKNFSHLLNVPFFKNLSLDLNYFYMVFAIFVIVGSSNAVNLTDGLDGLATVPIAFTAGSFALISYLVGNLIYANYLQLTYIPNTGELTVLCAGLVGSCLGFLWFNAQPAEVFMGDTGSLSLGGVLGIISVITKHEIVLAIIGGLFVIETTSVILQVYYFKATKGKRIFKMAPLHHHFEKHGWAESKVVIRFWIISVIFSLIGLSSLKLR.

10 consecutive transmembrane segments (helical) span residues 28–48 (LAIIITLSISFVTGPILIKFL), 74–94 (TMGGIMIILSSCLSTLLLADL), 99–119 (IWITLFGFISFGIIGFMDDYA), 133–153 (SKFLLQGIISLIIYVLLEYLD), 168–188 (LSLDLNYFYMVFAIFVIVGSS), 203–223 (VPIAFTAGSFALISYLVGNLI), 236–256 (TGELTVLCAGLVGSCLGFLWF), 263–283 (VFMGDTGSLSLGGVLGIISVI), 288–308 (IVLAIIGGLFVIETTSVILQV), and 338–358 (KVVIRFWIISVIFSLIGLSSL).

The protein belongs to the glycosyltransferase 4 family. MraY subfamily. It depends on Mg(2+) as a cofactor.

The protein localises to the cell inner membrane. The catalysed reaction is UDP-N-acetyl-alpha-D-muramoyl-L-alanyl-gamma-D-glutamyl-meso-2,6-diaminopimeloyl-D-alanyl-D-alanine + di-trans,octa-cis-undecaprenyl phosphate = di-trans,octa-cis-undecaprenyl diphospho-N-acetyl-alpha-D-muramoyl-L-alanyl-D-glutamyl-meso-2,6-diaminopimeloyl-D-alanyl-D-alanine + UMP. It participates in cell wall biogenesis; peptidoglycan biosynthesis. Functionally, catalyzes the initial step of the lipid cycle reactions in the biosynthesis of the cell wall peptidoglycan: transfers peptidoglycan precursor phospho-MurNAc-pentapeptide from UDP-MurNAc-pentapeptide onto the lipid carrier undecaprenyl phosphate, yielding undecaprenyl-pyrophosphoryl-MurNAc-pentapeptide, known as lipid I. The protein is Phospho-N-acetylmuramoyl-pentapeptide-transferase of Rickettsia prowazekii (strain Madrid E).